A 309-amino-acid polypeptide reads, in one-letter code: 4-hydroxy-3-methylbut-2-enyl diphosphate reductase (309 aa).

Cys-13 is a binding site for [4Fe-4S] cluster. Residues His-42 and His-75 each coordinate (2E)-4-hydroxy-3-methylbut-2-enyl diphosphate. Dimethylallyl diphosphate contacts are provided by His-42 and His-75. The isopentenyl diphosphate site is built by His-42 and His-75. Cys-97 provides a ligand contact to [4Fe-4S] cluster. His-125 is a (2E)-4-hydroxy-3-methylbut-2-enyl diphosphate binding site. His-125 is a binding site for dimethylallyl diphosphate. Residue His-125 participates in isopentenyl diphosphate binding. The active-site Proton donor is Glu-127. Position 165 (Thr-165) interacts with (2E)-4-hydroxy-3-methylbut-2-enyl diphosphate. Position 195 (Cys-195) interacts with [4Fe-4S] cluster. (2E)-4-hydroxy-3-methylbut-2-enyl diphosphate is bound by residues Ser-223, Ser-224, Asn-225, and Ser-267. Residues Ser-223, Ser-224, Asn-225, and Ser-267 each contribute to the dimethylallyl diphosphate site. Residues Ser-223, Ser-224, Asn-225, and Ser-267 each contribute to the isopentenyl diphosphate site.

Belongs to the IspH family. [4Fe-4S] cluster serves as cofactor.

It carries out the reaction isopentenyl diphosphate + 2 oxidized [2Fe-2S]-[ferredoxin] + H2O = (2E)-4-hydroxy-3-methylbut-2-enyl diphosphate + 2 reduced [2Fe-2S]-[ferredoxin] + 2 H(+). The catalysed reaction is dimethylallyl diphosphate + 2 oxidized [2Fe-2S]-[ferredoxin] + H2O = (2E)-4-hydroxy-3-methylbut-2-enyl diphosphate + 2 reduced [2Fe-2S]-[ferredoxin] + 2 H(+). It functions in the pathway isoprenoid biosynthesis; dimethylallyl diphosphate biosynthesis; dimethylallyl diphosphate from (2E)-4-hydroxy-3-methylbutenyl diphosphate: step 1/1. Its pathway is isoprenoid biosynthesis; isopentenyl diphosphate biosynthesis via DXP pathway; isopentenyl diphosphate from 1-deoxy-D-xylulose 5-phosphate: step 6/6. Functionally, catalyzes the conversion of 1-hydroxy-2-methyl-2-(E)-butenyl 4-diphosphate (HMBPP) into a mixture of isopentenyl diphosphate (IPP) and dimethylallyl diphosphate (DMAPP). Acts in the terminal step of the DOXP/MEP pathway for isoprenoid precursor biosynthesis. The chain is 4-hydroxy-3-methylbut-2-enyl diphosphate reductase from Chlamydia caviae (strain ATCC VR-813 / DSM 19441 / 03DC25 / GPIC) (Chlamydophila caviae).